A 153-amino-acid polypeptide reads, in one-letter code: UPF0756 membrane protein Pjdr2_2290 (153 aa).

Transmembrane regions (helical) follow at residues 6 to 26, 50 to 70, 75 to 95, 111 to 131, and 132 to 152; these read LILV…IATA, LELG…SGKV, LIAA…AVAA, MVVG…GIPV, and GPLM…LMSG.

It belongs to the UPF0756 family.

It is found in the cell membrane. This Paenibacillus sp. (strain JDR-2) protein is UPF0756 membrane protein Pjdr2_2290.